The sequence spans 1627 residues: Surface protein G (1627 aa).

An N-terminal signal peptide occupies residues 1-50; the sequence is MRDKKGPVNKRVDFLSNKLNKYSIRKFTVGTASILIGSLMYLGTQQEAEA. The short motif at 22 to 33 is the YSIRK-G/S signaling motif element; that stretch reads YSIRKFTVGTAS. The ligand binding A region, squamous nasal epithelial cell binding stretch occupies residues 51-418; it reads AENNIENPTT…KGSEFTFTPE (368 aa). 3 disordered regions span residues 74-143, 440-467, and 496-1601; these read EVTN…VRKA, KFNP…TTPT, and EYGP…TGLE. Composition is skewed to basic and acidic residues over residues 96–120, 451–461, 505–523, 554–570, 579–589, 606–619, 633–651, 682–698, 707–717, 736–747, 761–779, 810–826, 835–845, 862–875, 889–907, 938–954, 963–973, 990–1003, 1017–1035, 1066–1082, 1091–1101, 1118–1131, 1145–1163, 1194–1210, 1219–1229, 1246–1259, 1273–1291, 1322–1338, 1347–1357, 1374–1387, 1431–1442, and 1459–1478; these read DTIE…KEVA, KVTREGQKGEK, GHRD…EEVP, SIVE…RKFN, SKGE…KDPI, GEPKEEITKDPI, SKGE…KDPV, KVIEEPVDDVIK, and FETK…RVKQ. The 83-residue stretch at 419 to 501 folds into the G5 1 domain; sequence APKTITELEK…NELTEYGPET (83 aa). Residues 547-629 form the G5 2 domain; it reads YGPVKGDSIV…NELTEYGPET (83 aa). One can recognise a G5 3 domain in the interval 675-757; that stretch reads YGPVKGDSIV…NELTEYGPET (83 aa). Positions 803 to 885 constitute a G5 4 domain; it reads YGPVKGDSIV…NELTEYGPET (83 aa). The G5 5 domain occupies 931–1013; that stretch reads YGPVKGDSIV…NELTEYGPET (83 aa). In terms of domain architecture, G5 6 spans 1059 to 1141; sequence YGPVKGDSIV…NELTEYGPET (83 aa). In terms of domain architecture, G5 7 spans 1187 to 1269; sequence YGPVKGDSIV…NELTEYGPET (83 aa). Positions 1315–1397 constitute a G5 8 domain; it reads YGPVKGDSIV…NELTEFGGEK (83 aa). In terms of domain architecture, G5 9 spans 1443 to 1525; that stretch reads HGPKTGTPET…DKIVEFGGEK (83 aa). The segment covering 1481-1495 has biased composition (polar residues); it reads QPGSKTITTPITVNP. The segment covering 1509 to 1539 has biased composition (basic and acidic residues); sequence EITKQPVDKIVEFGGEKPKDPKGPENPEKPS. Positions 1595–1599 match the LPXTG sorting signal motif; sequence LPKTG. Threonine 1598 carries the post-translational modification Pentaglycyl murein peptidoglycan amidated threonine. The propeptide at 1599–1627 is removed by sortase; sequence GLESTQKGLIFSSIIGIAGLMLLARRRKN.

The protein localises to the secreted. The protein resides in the cell wall. Promotes adhesion of bacterial cells to human squamous nasal epithelial cells, a phenomenon which is likely to be important in nasal colonization. Forms short, extremely dense and thin fibrils all over the bacterial surface. Does not bind to either buccal cells or non-differentiated keratinocytes. Promotes cellular aggregation leading to biofilm formation. The polypeptide is Surface protein G (sasG) (Staphylococcus aureus (strain NCTC 8325 / PS 47)).